Here is a 66-residue protein sequence, read N- to C-terminus: MERMDIIIWLLAVVIVLTTLMIFLHLKTLKIIRLLFPISKELSKKSCVFPWKKKWTKNYPPSSMYP.

Residues 8 to 24 (IWLLAVVIVLTTLMIFL) traverse the membrane as a helical segment. K54 is modified (N6-acetyllysine; alternate). Position 54 is an N6-succinyllysine; alternate (K54). N6-acetyllysine is present on K57.

This sequence belongs to the ATPase protein 8 family. In terms of assembly, component of the ATP synthase complex composed at least of ATP5F1A/subunit alpha, ATP5F1B/subunit beta, ATP5MC1/subunit c (homooctomer), MT-ATP6/subunit a, MT-ATP8/subunit 8, ATP5ME/subunit e, ATP5MF/subunit f, ATP5MG/subunit g, ATP5MK/subunit k, ATP5MJ/subunit j, ATP5F1C/subunit gamma, ATP5F1D/subunit delta, ATP5F1E/subunit epsilon, ATP5PF/subunit F6, ATP5PB/subunit b, ATP5PD/subunit d, ATP5PO/subunit OSCP. ATP synthase complex consists of a soluble F(1) head domain (subunits alpha(3) and beta(3)) - the catalytic core - and a membrane F(0) domain - the membrane proton channel (subunits c, a, 8, e, f, g, k and j). These two domains are linked by a central stalk (subunits gamma, delta, and epsilon) rotating inside the F1 region and a stationary peripheral stalk (subunits F6, b, d, and OSCP). Interacts with PRICKLE3.

The protein localises to the mitochondrion membrane. Its function is as follows. Subunit 8, of the mitochondrial membrane ATP synthase complex (F(1)F(0) ATP synthase or Complex V) that produces ATP from ADP in the presence of a proton gradient across the membrane which is generated by electron transport complexes of the respiratory chain. ATP synthase complex consist of a soluble F(1) head domain - the catalytic core - and a membrane F(1) domain - the membrane proton channel. These two domains are linked by a central stalk rotating inside the F(1) region and a stationary peripheral stalk. During catalysis, ATP synthesis in the catalytic domain of F(1) is coupled via a rotary mechanism of the central stalk subunits to proton translocation. In vivo, can only synthesize ATP although its ATP hydrolase activity can be activated artificially in vitro. Part of the complex F(0) domain. This Loxodonta africana (African elephant) protein is ATP synthase F(0) complex subunit 8.